The sequence spans 262 residues: 3-methyl-2-oxobutanoate hydroxymethyltransferase (262 aa).

Mg(2+) is bound by residues aspartate 42 and aspartate 81. Residues 42–43 (DS), aspartate 81, and lysine 110 contribute to the 3-methyl-2-oxobutanoate site. Glutamate 112 is a Mg(2+) binding site. Glutamate 180 (proton acceptor) is an active-site residue.

This sequence belongs to the PanB family. In terms of assembly, homodecamer; pentamer of dimers. It depends on Mg(2+) as a cofactor.

The protein localises to the cytoplasm. It carries out the reaction 3-methyl-2-oxobutanoate + (6R)-5,10-methylene-5,6,7,8-tetrahydrofolate + H2O = 2-dehydropantoate + (6S)-5,6,7,8-tetrahydrofolate. It participates in cofactor biosynthesis; (R)-pantothenate biosynthesis; (R)-pantoate from 3-methyl-2-oxobutanoate: step 1/2. Functionally, catalyzes the reversible reaction in which hydroxymethyl group from 5,10-methylenetetrahydrofolate is transferred onto alpha-ketoisovalerate to form ketopantoate. This is 3-methyl-2-oxobutanoate hydroxymethyltransferase from Legionella pneumophila subsp. pneumophila (strain Philadelphia 1 / ATCC 33152 / DSM 7513).